Here is a 357-residue protein sequence, read N- to C-terminus: UDP-N-acetylglucosamine--N-acetylmuramyl-(pentapeptide) pyrophosphoryl-undecaprenol N-acetylglucosamine transferase (357 aa).

UDP-N-acetyl-alpha-D-glucosamine is bound by residues 14–16, Asn120, Arg164, Ser194, and Gln291; that span reads TGG.

It belongs to the glycosyltransferase 28 family. MurG subfamily.

The protein localises to the cell inner membrane. The enzyme catalyses di-trans,octa-cis-undecaprenyl diphospho-N-acetyl-alpha-D-muramoyl-L-alanyl-D-glutamyl-meso-2,6-diaminopimeloyl-D-alanyl-D-alanine + UDP-N-acetyl-alpha-D-glucosamine = di-trans,octa-cis-undecaprenyl diphospho-[N-acetyl-alpha-D-glucosaminyl-(1-&gt;4)]-N-acetyl-alpha-D-muramoyl-L-alanyl-D-glutamyl-meso-2,6-diaminopimeloyl-D-alanyl-D-alanine + UDP + H(+). Its pathway is cell wall biogenesis; peptidoglycan biosynthesis. Functionally, cell wall formation. Catalyzes the transfer of a GlcNAc subunit on undecaprenyl-pyrophosphoryl-MurNAc-pentapeptide (lipid intermediate I) to form undecaprenyl-pyrophosphoryl-MurNAc-(pentapeptide)GlcNAc (lipid intermediate II). This Fusobacterium nucleatum subsp. nucleatum (strain ATCC 25586 / DSM 15643 / BCRC 10681 / CIP 101130 / JCM 8532 / KCTC 2640 / LMG 13131 / VPI 4355) protein is UDP-N-acetylglucosamine--N-acetylmuramyl-(pentapeptide) pyrophosphoryl-undecaprenol N-acetylglucosamine transferase.